A 283-amino-acid chain; its full sequence is MKQYLDLCQRIVDQGVWVENERTGKRCLTVINADLTYDVGNNQFPLVTTRKSFWKAAVAELLGYIRGYDNAADFRQLGTKTWDANANLNQAWLNNPYRKGEDDMGRVYGVQGRAWAKPDGGHIDQLKKIVDDLSRGVDDRGEILNFYNPGEFHMGCLRPCMYSHHFSLLGDTLYLNSTQRSCDVPLGLNFNMVQVYVFLALMAQITGKKPGLAYHKIVNAHIYQDQLELMRDVQLKREPFPAPQFHINPKIKTLQDLETWVTLDDFDVTGYQFHDPIQYPFSV.

A dUMP-binding site is contributed by R22. Residue C160 is the Nucleophile of the active site. DUMP contacts are provided by residues 180 to 183 (RSCD), N191, and 221 to 223 (HIY). D183 is a binding site for (6R)-5,10-methylene-5,6,7,8-tetrahydrofolate. S282 contacts (6R)-5,10-methylene-5,6,7,8-tetrahydrofolate.

This sequence belongs to the thymidylate synthase family. Bacterial-type ThyA subfamily. Homodimer.

Its subcellular location is the cytoplasm. It carries out the reaction dUMP + (6R)-5,10-methylene-5,6,7,8-tetrahydrofolate = 7,8-dihydrofolate + dTMP. The protein operates within pyrimidine metabolism; dTTP biosynthesis. Its function is as follows. Catalyzes the reductive methylation of 2'-deoxyuridine-5'-monophosphate (dUMP) to 2'-deoxythymidine-5'-monophosphate (dTMP) while utilizing 5,10-methylenetetrahydrofolate (mTHF) as the methyl donor and reductant in the reaction, yielding dihydrofolate (DHF) as a by-product. This enzymatic reaction provides an intracellular de novo source of dTMP, an essential precursor for DNA biosynthesis. This Vibrio cholerae serotype O1 (strain ATCC 39541 / Classical Ogawa 395 / O395) protein is Thymidylate synthase.